The primary structure comprises 946 residues: MTVNLTTANEFIARHIGPRQEDEQHMLASLGFDSLEALSASVIPESIKGTSVLGLEDGLSEAEALAKIKAIAGQNQLFKTYIGQGYYNCHTPSPILRNLLENPAWYTAYTPYQPEISQGRLEALLNFQTLISDLTGLPIANASLLDEATAAAEAMTFCKRLSKNKGSNAFFASIHSHPQTLDVLRTRAEPLGIDVVVGDERELTDVSAFFGALLQYPASNGDVFDYRALTERFHASNALVAVAADLLALTLLTPPGEFGADVAIGSAQRFGVPLGFGGPHAAYFSTKDAFKRDMPGRLVGVSVDRFGKPALRLAMQTREQHIRREKATSNICTAQVLLANIASMYAVYHGPKGLTQIAQRIHQLTAILAKGLTALGQKVEQEHFFDTLTLNTGANTATLHDKARAQRINLRVVDAERLGVSVDETTTQADIETLWAIFADGKALPDFAANVDSTLPAALLRQSPILSHPVFNRYHSETELMRYLRKLADKDLALDRTMIPLGSCTMKLNAASEMIPVTWAEFGALHPFAPAEQSAGYLQLTSDLEAMLCAATGYDAISLQPNAGSQGEYAGLLAIRAYHQSRGEERRDICLIPSSAHGTNPATANMAGMRVVVTACDARGNVDIEDLRAKAIEHRDHLAALMITYPSTHGVFEEGIREICGIIHDNGGQVYIDGANMNAMVGLCAPGKFGGDVSHLNLHKTFCIPHGGGGPGVGPIGVKSHLTPFLPGHAAMERKEGAVCAAPFGSASILPITWMYISMMGGAGLKRASQLAILNANYISRRLEEHYPVLYTGSNGLVAHECILDLRPLKDSSGISVDDVAKRLIDFGFHAPTMSFPVAGTLMIEPTESESKEELDRFCDAMIAIREEIRAVENGTLDKDDNPLKNAPHTAAELVGEWSHPYSREQAVYPVASLIEGKYWPPVGRVDNVFGDRNLVCACPSIESYA.

Lysine 700 bears the N6-(pyridoxal phosphate)lysine mark.

This sequence belongs to the GcvP family. The glycine cleavage system is composed of four proteins: P, T, L and H. Pyridoxal 5'-phosphate serves as cofactor.

The enzyme catalyses N(6)-[(R)-lipoyl]-L-lysyl-[glycine-cleavage complex H protein] + glycine + H(+) = N(6)-[(R)-S(8)-aminomethyldihydrolipoyl]-L-lysyl-[glycine-cleavage complex H protein] + CO2. Functionally, the glycine cleavage system catalyzes the degradation of glycine. The P protein binds the alpha-amino group of glycine through its pyridoxal phosphate cofactor; CO(2) is released and the remaining methylamine moiety is then transferred to the lipoamide cofactor of the H protein. The protein is Glycine dehydrogenase (decarboxylating) of Pseudomonas fluorescens (strain SBW25).